The following is a 2517-amino-acid chain: Cullin-9 (2517 aa).

Lys-87 participates in a covalent cross-link: Glycyl lysine isopeptide (Lys-Gly) (interchain with G-Cter in ubiquitin). Positions 276–288 (SPELGAGDQSSPC) are enriched in polar residues. The disordered stretch occupies residues 276 to 296 (SPELGAGDQSSPCATREKSRG). The CPH domain maps to 366-439 (RSEFSSRSGY…HWHMLEILGP (74 aa)). Over residues 576 to 589 (SNEPSSSSTSRNHS) the composition is skewed to low complexity. The tract at residues 576–639 (SNEPSSSSTS…TETPMAQSDS (64 aa)) is disordered. Positions 593–609 (DPEEESKSEASFSEEET) are enriched in acidic residues. Basic and acidic residues predominate over residues 610 to 630 (ESLKAKAEAPKTEAEPTKTRT). Ser-976 is subject to Phosphoserine. One can recognise a DOC domain in the interval 1143 to 1322 (PINIPFFDVF…RTCLFYTIRA (180 aa)). Position 1363–1370 (1363–1370 (AAQALGKT)) interacts with ATP. Disordered stretches follow at residues 1432-1466 (VEPP…VLPS) and 1664-1685 (DEEE…AEKE). The segment covering 1433 to 1443 (EPPPGPSPEPS) has biased composition (pro residues). Position 1457 is a phosphoserine (Ser-1457). Residues 1649–1691 (LFQLQRLDKLFLEQEDEEEKRLEEEEEEEEEEEAEKELFIEDP) are a coiled coil. Acidic residues predominate over residues 1664–1683 (DEEEKRLEEEEEEEEEEEAE). Lys-1881 participates in a covalent cross-link: Glycyl lysine isopeptide (Lys-Gly) (interchain with G-Cter in NEDD8). Residues 2066-2283 (RPDHCPVCVS…KDYYNCSAMV (218 aa)) form a TRIAD supradomain region. Zn(2+) is bound by residues Cys-2070, Cys-2073, Cys-2088, His-2090, Cys-2093, Cys-2096, Cys-2115, Cys-2120, Cys-2160, Cys-2166, Cys-2181, Cys-2184, Cys-2189, Cys-2192, His-2198, Cys-2203, Cys-2236, and Cys-2239. An RING-type 1 zinc finger spans residues 2070 to 2120 (CPVCVSPLGCDDDLPSLCCMHYCCKSCWNEYLTTRIEQNLVLNCTCPIADC). Residues 2140 to 2203 (SKYEKALLRG…FPEAHYPASC (64 aa)) form an IBR-type zinc finger. The RING-type 2; atypical zinc-finger motif lies at 2236–2265 (CPSCQAPIEKNEGCLHMTCAKCNHGFCWRC). The active site involves Cys-2249. Cys-2254, Cys-2257, Cys-2262, Cys-2265, His-2273, and Cys-2279 together coordinate Zn(2+). A coiled-coil region spans residues 2365 to 2385 (VEQQTENLELHTNALQILLEE). Phosphoserine is present on Ser-2436. Residues 2442-2517 (WEAKGPNMPG…EEEDEDEAYD (76 aa)) form a disordered region. Acidic residues-rich tracts occupy residues 2461-2499 (EAEE…ENLD) and 2506-2517 (GDEEEDEDEAYD).

It belongs to the cullin family. Component of the Cul9-RING complex consisting of CUL9 and RBX1; the CUL9-RBX1 complex is a heterododecamer composed of six CUL9 and six RBX1 protomers. Interacts (via C-terminal TRIAD/RBR supradomain) with E2 ubiquitin-conjugating enzyme UBE2L3. Interacts with CUL7; the interaction with the CUL7 component of the 3M complex leads to inhibition of CUL9 activity. The CUL7-CUL9 heterodimer seems to interact specifically with TP53, likely via the CPH domain. Forms a complex with p53/TP53 in the cytoplasm of unstressed cells. Interacts with UBCH7 and UBCH8. In terms of processing, autoubiquitinated by the CUL9-RBX1 complex at Lys-87. Post-translationally, neddylated. Neddylation is mediated by E1 enzyme UBA3-NAE1 complex and E2 enzyme UBE2F. Structural rearrangment of the C-terminal TRIAD/RBR supradomain may play a role in neddylation and deneddylation. As to expression, ubiquitously expressed in all tissues with highest expression in testis brain and kidney.

The protein resides in the cytoplasm. Core component of a Cul9-RING ubiquitin-protein ligase complex composed of CUL9 and RBX1. The CUL9-RBX1 complex mediates ubiquitination and subsequent degradation of BIRC5 and is required to maintain microtubule dynamics and genome integrity. Acts downstream of the 3M complex, which inhibits the ubiquitination of BIRC5. The CUL9-RBX1 complex also mediates mono-ubiquitination of p53/TP53. Acts as a cytoplasmic anchor protein in p53/TP53-associated protein complex. Regulates the subcellular localization of p53/TP53 and its subsequent function. Ubiquitinates apurinic/apyrimidinic endodeoxyribonuclease APEX2. Ubiquitination by the CUL9-RBX1 complex is predominantly mediated by E2 ubiquitin-conjugating enzymes UBE2L3 and UBE2D2. In Homo sapiens (Human), this protein is Cullin-9 (CUL9).